Consider the following 272-residue polypeptide: Type II secretion system protein C (272 aa).

At 1 to 16 the chain is on the cytoplasmic side; that stretch reads MNISKLPPLSPSVIRR. Residues 17 to 35 form a helical membrane-spanning segment; it reads ILFYLLMLLFCQQLAMIFW. The Periplasmic segment spans residues 36–272; the sequence is RVGLPDNSPV…DIYMEFGGDE (237 aa).

The protein belongs to the GSP C family.

It localises to the cell inner membrane. In terms of biological role, involved in a type II secretion system (T2SS, formerly general secretion pathway, GSP) for the export of proteins. Required for the translocation of the multiple pectic enzymes. The chain is Type II secretion system protein C (outC) from Dickeya chrysanthemi (Pectobacterium chrysanthemi).